Consider the following 449-residue polypeptide: Chitobiosyldiphosphodolichol beta-mannosyltransferase (449 aa).

Residues 1–7 (MFLEIPR) lie on the Lumenal side of the membrane. The helical transmembrane segment at 8-28 (WLLALIILYLSIPLVVYYVIP) threads the bilayer. A Dolichol recognition motif is present at residues 21-32 (LVVYYVIPYLFY). Topologically, residues 29 to 104 (YLFYGNKSTK…SNLKRKGGGT (76 aa)) are cytoplasmic. Residues 105–125 (SVIFMVKKVLFQVLSIFKLLW) constitute an intramembrane region (helical). The Cytoplasmic portion of the chain corresponds to 126–449 (ELRGSDYILV…RTMRDLKLIH (324 aa)). A required for oligomerization region spans residues 435–449 (QSNWERTMRDLKLIH).

This sequence belongs to the glycosyltransferase group 1 family. Glycosyltransferase 33 subfamily. Homodimer. ALG1 forms mannosyltransferases (MT) heteromeric complexes with either ALG2 or ALG11.

The protein resides in the endoplasmic reticulum membrane. The catalysed reaction is an N,N'-diacetylchitobiosyl-diphospho-di-trans,poly-cis-dolichol + GDP-alpha-D-mannose = a beta-D-Man-(1-&gt;4)-beta-D-GlcNAc-(1-&gt;4)-alpha-D-GlcNAc-diphospho-di-trans,poly-cis-dolichol + GDP + H(+). It participates in protein modification; protein glycosylation. Its function is as follows. Participates in the formation of the lipid-linked precursor oligosaccharide for N-glycosylation. Involved in assembling the dolichol-pyrophosphate-GlcNAc(2)-Man(5) intermediate on the cytoplasmic surface of the ER. This chain is Chitobiosyldiphosphodolichol beta-mannosyltransferase (ALG1), found in Saccharomyces cerevisiae (strain ATCC 204508 / S288c) (Baker's yeast).